Reading from the N-terminus, the 309-residue chain is Isethionate sulfite-lyase activating enzyme (309 aa).

A Radical SAM core domain is found at 22 to 309 (HDGPGIRTVV…VVAAEHATDG (288 aa)). Cysteine 36, cysteine 40, cysteine 43, cysteine 62, cysteine 68, cysteine 71, cysteine 75, cysteine 95, cysteine 98, cysteine 102, and cysteine 106 together coordinate [4Fe-4S] cluster. 42–44 (WCS) is an S-adenosyl-L-methionine binding site. 2 consecutive 4Fe-4S ferredoxin-type domains span residues 53-85 (IELA…RADD) and 86-117 (DTIS…YGTT). S-adenosyl-L-methionine contacts are provided by residues glycine 146, 195–197 (DIK), and histidine 268.

This sequence belongs to the organic radical-activating enzymes family. Monomer. [4Fe-4S] cluster serves as cofactor.

The enzyme catalyses glycyl-[protein] + reduced [flavodoxin] + S-adenosyl-L-methionine = glycin-2-yl radical-[protein] + semiquinone [flavodoxin] + 5'-deoxyadenosine + L-methionine + H(+). It participates in organosulfur degradation; alkanesulfonate degradation. Its function is as follows. Involved in an anaerobic respiration pathway that converts the sulfonate isethionate (2-hydroxyethanesulfonate) to ammonia, acetate and sulfide. Catalyzes activation of the isethionate sulfite-lyase IslA under anaerobic conditions by generation of an organic free radical on a glycine residue, via a homolytic cleavage of S-adenosyl-L-methionine (SAM). The sequence is that of Isethionate sulfite-lyase activating enzyme from Oleidesulfovibrio alaskensis (strain ATCC BAA-1058 / DSM 17464 / G20) (Desulfovibrio alaskensis).